Consider the following 283-residue polypeptide: Phosphatidylglycerol--prolipoprotein diacylglyceryl transferase (283 aa).

The next 7 membrane-spanning stretches (helical) occupy residues isoleucine 21 to alanine 41, tyrosine 62 to tyrosine 82, phenylalanine 106 to tyrosine 126, leucine 136 to isoleucine 156, proline 190 to alanine 210, glycine 218 to tyrosine 238, and leucine 252 to tyrosine 272. Residue arginine 155 participates in a 1,2-diacyl-sn-glycero-3-phospho-(1'-sn-glycerol) binding.

It belongs to the Lgt family.

It is found in the cell inner membrane. The catalysed reaction is L-cysteinyl-[prolipoprotein] + a 1,2-diacyl-sn-glycero-3-phospho-(1'-sn-glycerol) = an S-1,2-diacyl-sn-glyceryl-L-cysteinyl-[prolipoprotein] + sn-glycerol 1-phosphate + H(+). It participates in protein modification; lipoprotein biosynthesis (diacylglyceryl transfer). Functionally, catalyzes the transfer of the diacylglyceryl group from phosphatidylglycerol to the sulfhydryl group of the N-terminal cysteine of a prolipoprotein, the first step in the formation of mature lipoproteins. The sequence is that of Phosphatidylglycerol--prolipoprotein diacylglyceryl transferase from Helicobacter acinonychis (strain Sheeba).